Here is a 541-residue protein sequence, read N- to C-terminus: Pseudokinase FAM20A (541 aa).

Positions 1–33 (MPGLRRDRLLALLLLGALFSADLYFHLWPQVQR) are cleaved as a signal peptide. Residues Asn-70, Asn-145, and Asn-287 are each glycosylated (N-linked (GlcNAc...) asparagine). 4 disulfide bridges follow: Cys-314/Cys-330, Cys-319/Cys-323, Cys-378/Cys-452, and Cys-453/Cys-512. Residue Asn-388 is glycosylated (N-linked (GlcNAc...) asparagine). N-linked (GlcNAc...) asparagine glycosylation occurs at Asn-538.

It belongs to the FAM20 family. Interacts with FAM20C; probably forming a heterotetramer of 2 subunits of FAM20A and 2 subunits of FAM20C. N-glycosylated. In terms of tissue distribution, in the mammary gland, expressed at higher levels in lactating mice than in virgin mice. Observed throughout the tissues of the mandibular incisor, including the secretory and maturation stage ameloblasts, the suprabasal layers of the gingival epithelium and the odontoblasts. Weak expression in the enamel matrix.

It localises to the secreted. It is found in the golgi apparatus. The protein localises to the endoplasmic reticulum. Functionally, pseudokinase that acts as an allosteric activator of the Golgi serine/threonine protein kinase FAM20C and is involved in biomineralization of teeth. Forms a complex with FAM20C and increases the ability of FAM20C to phosphorylate the proteins that form the 'matrix' that guides the deposition of the enamel minerals. The polypeptide is Pseudokinase FAM20A (Mus musculus (Mouse)).